The sequence spans 565 residues: Small ribosomal subunit protein bS1 (565 aa).

6 S1 motif domains span residues 30–96 (SSVI…LSRD), 114–180 (NEKV…VSRR), 201–269 (GQVI…LGMK), 286–356 (NARF…LGLK), 373–443 (GSTV…LGVK), and 454–529 (GDVK…VSIK).

Belongs to the bacterial ribosomal protein bS1 family. Post-translationally, the initiator methionine may be removed.

In terms of biological role, binds mRNA; thus facilitating recognition of the initiation point. It is needed to translate mRNA with a short Shine-Dalgarno (SD) purine-rich sequence. The chain is Small ribosomal subunit protein bS1 (rpsA) from Rhodopseudomonas palustris (strain ATCC BAA-98 / CGA009).